The chain runs to 93 residues: uncharacterized protein (93 aa).

To E.coli YeaC.

This is an uncharacterized protein from Pseudoalteromonas haloplanktis (Alteromonas haloplanktis).